A 268-amino-acid chain; its full sequence is Microtubule-associated protein RP/EB family member 1 (268 aa).

The residue at position 2 (alanine 2) is an N-acetylalanine. Positions 14–116 (NLSRHDMLAW…FVQWFKKFFD (103 aa)) constitute a Calponin-homology (CH) domain. Lysine 66 bears the N6-crotonyllysine mark. Tyrosine 124 bears the Phosphotyrosine mark. Residues 124–268 (YDPVAARQGQ…GGPQEEQEEY (145 aa)) form an interaction with MTUS2/TIP150 region. Residues 146–191 (LSKPKKPLGSGSAAPQRPIATQRTTAAPKAGPGMVRKNPGMGNGDD) are disordered. Serine 155 is subject to Phosphoserine. In terms of domain architecture, EB1 C-terminal spans 185–255 (GMGNGDDEAA…LYATDEGFVI (71 aa)). The interaction with APC stretch occupies residues 206-211 (TVEDLE). Positions 208 to 268 (EDLEKERDFY…GGPQEEQEEY (61 aa)) are DCTN1-binding. N6-acetyllysine is present on lysine 220. An APC-binding region spans residues 220–242 (KLRNIELICQENEGENDPVLQRI). An interaction with SKA1 region spans residues 232 to 255 (EGENDPVLQRIVDILYATDEGFVI).

It belongs to the MAPRE family. In terms of assembly, homodimer. Heterodimer with MAPRE3. Interacts with DCTN1, DCTN2, TERF1 and dynein intermediate chain. Interaction with DIAPH1 and DIAPH2. Interacts (via C-terminal residues 206-211) with APC (via C-terminal residues 2674-2845); the interaction inhibits association with and bundling of F-actin. Interacts with CLASP2, DST, KIF2C and STIM1; probably required for their targeting to the growing microtubule plus ends. Interacts with MTUS2; interaction is direct and probably targets MTUS2 to microtubules. Interacts (via C-terminus) with SKA1 (via SXIP motif); the interaction is direct and stabilizes the kinetochore-microtubule attachment of the SKA1 complex. Interacts with APC2. Interacts with CLASP1. Interacts with CDK5RAP2. According to another report, MAPRE1 does not interact with CDK5RAP2. Interacts with MACF1. Interacts with RABL2/RABL2A; binds preferentially to GTP-bound RABL2. Interacts with KCNAB2. Interacts (via C-terminus) with CLIP1. Interacts with SLAIN2 and SLAIN1. Interacts with KIF18B; this interaction is required for efficient accumulation of KIF18B at microtubule plus ends. Interacts with MISP. Interacts with KNSTRN. Interacts with NCKAP5L. Interacts with AKAP9. Interacts with PDE4DIP; this interaction, which is PDE4DIP isoform-specific, is required for its recruitment to the Golgi apparatus. Interacts with CAMSAP2. May form a pericentrosomal complex with AKAP9, CDK5RAP2 and PDE4DIP isoform 2/MMG8/SMYLE; within this complex, MAPRE1 binding to CDK5RAP2 may be mediated by PDE4DIP. Contrary to other mammalian species, does not interact with CDK5RAP2, possibly due to the lack of conservation of the MAPRE1-binding motif in rat CDK5RAP2. Interacts with AKNA. Interacts with GAS2L1, GAS2L2, and GAS2L3. Interacts with RARRES1 and AGBL2. In terms of processing, acetylation at Lys-220 by KAT2B/PCAF promotes dynamic kinetochore-microtubule interactions in early mitosis. Post-translationally, crotonylated by KAT5 during mitosis, promoting astral microtubule plasticity and dynamic connection between astral microtubules and the cortex during mitotic chromosome segregation, thereby ensuring accurate spindle positioning in mitosis. Decrotonylated by HDAC3.

The protein resides in the cytoplasm. Its subcellular location is the cytoskeleton. The protein localises to the microtubule organizing center. It is found in the centrosome. It localises to the golgi apparatus. The protein resides in the spindle. Its subcellular location is the spindle pole. In terms of biological role, plus-end tracking protein (+TIP) that binds to the plus-end of microtubules and regulates the dynamics of the microtubule cytoskeleton. Recruits other +TIP proteins to microtubules by binding to a conserved Ser-X-Leu-Pro (SXLP) motif in their polypeptide chains. Promotes cytoplasmic microtubule nucleation and elongation. Involved in mitotic spindle positioning by stabilizing microtubules and promoting dynamic connection between astral microtubules and the cortex during mitotic chromosome segregation. Assists chromosome alignment in metaphase by recruiting the SKA complex to the spindle and stabilizing its interactions with microtubule bundles (K-fibers). Also acts as a regulator of minus-end microtubule organization: interacts with the complex formed by AKAP9 and PDE4DIP, leading to recruit CAMSAP2 to the Golgi apparatus, thereby tethering non-centrosomal minus-end microtubules to the Golgi, an important step for polarized cell movement. Promotes elongation of CAMSAP2-decorated microtubule stretches on the minus-end of microtubules. Acts as a regulator of autophagosome transport via interaction with CAMSAP2. Functions downstream of Rho GTPases and DIAPH1 in stable microtubule formation. May play a role in cell migration. This is Microtubule-associated protein RP/EB family member 1 (Mapre1) from Rattus norvegicus (Rat).